Reading from the N-terminus, the 240-residue chain is Thiamine-phosphate synthase (240 aa).

Residues 63 to 67 (QYREK) and asparagine 94 each bind 4-amino-2-methyl-5-(diphosphooxymethyl)pyrimidine. 2 residues coordinate Mg(2+): aspartate 95 and aspartate 114. Threonine 133 serves as a coordination point for 4-amino-2-methyl-5-(diphosphooxymethyl)pyrimidine. 159–161 (TFT) provides a ligand contact to 2-[(2R,5Z)-2-carboxy-4-methylthiazol-5(2H)-ylidene]ethyl phosphate. A 4-amino-2-methyl-5-(diphosphooxymethyl)pyrimidine-binding site is contributed by lysine 162. 2-[(2R,5Z)-2-carboxy-4-methylthiazol-5(2H)-ylidene]ethyl phosphate contacts are provided by residues glycine 190 and 210 to 211 (IS).

This sequence belongs to the thiamine-phosphate synthase family. Mg(2+) is required as a cofactor.

The catalysed reaction is 2-[(2R,5Z)-2-carboxy-4-methylthiazol-5(2H)-ylidene]ethyl phosphate + 4-amino-2-methyl-5-(diphosphooxymethyl)pyrimidine + 2 H(+) = thiamine phosphate + CO2 + diphosphate. The enzyme catalyses 2-(2-carboxy-4-methylthiazol-5-yl)ethyl phosphate + 4-amino-2-methyl-5-(diphosphooxymethyl)pyrimidine + 2 H(+) = thiamine phosphate + CO2 + diphosphate. It catalyses the reaction 4-methyl-5-(2-phosphooxyethyl)-thiazole + 4-amino-2-methyl-5-(diphosphooxymethyl)pyrimidine + H(+) = thiamine phosphate + diphosphate. The protein operates within cofactor biosynthesis; thiamine diphosphate biosynthesis; thiamine phosphate from 4-amino-2-methyl-5-diphosphomethylpyrimidine and 4-methyl-5-(2-phosphoethyl)-thiazole: step 1/1. Functionally, condenses 4-methyl-5-(beta-hydroxyethyl)thiazole monophosphate (THZ-P) and 2-methyl-4-amino-5-hydroxymethyl pyrimidine pyrophosphate (HMP-PP) to form thiamine monophosphate (TMP). The polypeptide is Thiamine-phosphate synthase (Methanosarcina mazei (strain ATCC BAA-159 / DSM 3647 / Goe1 / Go1 / JCM 11833 / OCM 88) (Methanosarcina frisia)).